A 308-amino-acid polypeptide reads, in one-letter code: Transaldolase (308 aa).

Catalysis depends on Lys125, which acts as the Schiff-base intermediate with substrate.

This sequence belongs to the transaldolase family. Type 1 subfamily. In terms of assembly, homodimer.

The protein resides in the cytoplasm. The catalysed reaction is D-sedoheptulose 7-phosphate + D-glyceraldehyde 3-phosphate = D-erythrose 4-phosphate + beta-D-fructose 6-phosphate. Its pathway is carbohydrate degradation; pentose phosphate pathway; D-glyceraldehyde 3-phosphate and beta-D-fructose 6-phosphate from D-ribose 5-phosphate and D-xylulose 5-phosphate (non-oxidative stage): step 2/3. Transaldolase is important for the balance of metabolites in the pentose-phosphate pathway. This Pseudomonas entomophila (strain L48) protein is Transaldolase.